The sequence spans 269 residues: Tryptophan synthase alpha chain (269 aa).

Residues Glu49 and Asp60 each act as proton acceptor in the active site.

The protein belongs to the TrpA family. Tetramer of two alpha and two beta chains.

The catalysed reaction is (1S,2R)-1-C-(indol-3-yl)glycerol 3-phosphate + L-serine = D-glyceraldehyde 3-phosphate + L-tryptophan + H2O. It functions in the pathway amino-acid biosynthesis; L-tryptophan biosynthesis; L-tryptophan from chorismate: step 5/5. Its function is as follows. The alpha subunit is responsible for the aldol cleavage of indoleglycerol phosphate to indole and glyceraldehyde 3-phosphate. In Actinobacillus pleuropneumoniae serotype 7 (strain AP76), this protein is Tryptophan synthase alpha chain.